A 369-amino-acid chain; its full sequence is Olfactory receptor 2T1 (369 aa).

Residues 1–76 (MWQEYYFLNV…LFNRKETSGL (76 aa)) are Extracellular-facing. N-linked (GlcNAc...) asparagine glycosylation occurs at asparagine 56. The chain crosses the membrane as a helical span at residues 77-97 (IFAIISIIFFTALMANGVMIF). The Cytoplasmic segment spans residues 98–107 (LIQTDLRLHT). A helical transmembrane segment spans residues 108-128 (PMYFLLSHLSLIDMMYISTIV). At 129 to 148 (PKMLVNYLLDQRTISFVGCT) the chain is on the extracellular side. A disulfide bridge links cysteine 147 with cysteine 239. The helical transmembrane segment at 149-169 (AQHFLYLTLVGAEFFLLGLMA) threads the bilayer. Topologically, residues 170 to 191 (YDRYVAICNPLRYPVLMSRRVC) are cytoplasmic. A helical membrane pass occupies residues 192 to 212 (WMIIAGSWFGGSLDGFLLTPI). Topologically, residues 213-247 (TMSFPFCNSREINHFFCEAPAVLKLACADTALYET) are extracellular. A helical transmembrane segment spans residues 248 to 268 (VMYVCCVLMLLIPFSVVLASY). At 269–286 (ARILTTVQCMSSVEGRKK) the chain is on the cytoplasmic side. The helical transmembrane segment at 287–307 (AFATCSSHMTVVSLFYGAAMY) threads the bilayer. At 308–321 (TYMLPHSYHKPAQD) the chain is on the extracellular side. Residues 322–342 (KVLSVFYTILTPMLNPLIYSL) traverse the membrane as a helical segment. Topologically, residues 343-369 (RNKDVTGALKRALGRFKGPQRVSGGVF) are cytoplasmic.

It belongs to the G-protein coupled receptor 1 family.

The protein resides in the cell membrane. Odorant receptor. This Homo sapiens (Human) protein is Olfactory receptor 2T1 (OR2T1).